Here is a 196-residue protein sequence, read N- to C-terminus: UMP-CMP kinase (196 aa).

Residue 13–18 (GAGKGT) coordinates ATP. S33 is subject to Phosphoserine. Residues 33 to 63 (SAGELLRDERKNPDSQYGELIEKYIKDGKIV) form an NMP region. R39 lines the a ribonucleoside 5'-phosphate pocket. An N6-acetyllysine mark is found at K43 and K55. Residues 61-63 (KIV) and 93-96 (GFPR) each bind a ribonucleoside 5'-phosphate. N100 lines the CMP pocket. K106 bears the N6-succinyllysine mark. The segment at 133-143 (ERGKSSGRSDD) is LID. R134 is an ATP binding site. A ribonucleoside 5'-phosphate is bound by residues R140 and R151. K179 serves as a coordination point for ATP. Phosphoserine is present on S180.

Belongs to the adenylate kinase family. UMP-CMP kinase subfamily. In terms of assembly, monomer. Mg(2+) is required as a cofactor.

Its subcellular location is the nucleus. It localises to the cytoplasm. It catalyses the reaction CMP + ATP = CDP + ADP. It carries out the reaction dCMP + ATP = dCDP + ADP. The enzyme catalyses UMP + ATP = UDP + ADP. The catalysed reaction is a 2'-deoxyribonucleoside 5'-diphosphate + ATP = a 2'-deoxyribonucleoside 5'-triphosphate + ADP. It catalyses the reaction a ribonucleoside 5'-diphosphate + ATP = a ribonucleoside 5'-triphosphate + ADP. In terms of biological role, catalyzes the phosphorylation of pyrimidine nucleoside monophosphates at the expense of ATP. Plays an important role in de novo pyrimidine nucleotide biosynthesis. Has preference for UMP and CMP as phosphate acceptors. Also displays broad nucleoside diphosphate kinase activity. In Bos taurus (Bovine), this protein is UMP-CMP kinase.